Reading from the N-terminus, the 143-residue chain is Transcription antitermination protein NusB (143 aa).

Belongs to the NusB family.

In terms of biological role, involved in transcription antitermination. Required for transcription of ribosomal RNA (rRNA) genes. Binds specifically to the boxA antiterminator sequence of the ribosomal RNA (rrn) operons. The chain is Transcription antitermination protein NusB from Buchnera aphidicola subsp. Acyrthosiphon pisum (strain 5A).